The chain runs to 684 residues: Soluble guanylate cyclase gcy-32 (684 aa).

His-105 lines the heme pocket. The stretch at 396–432 (DVEVNLQLEANNEQLETMTRELELERQKTDSILKDML) forms a coiled coil. The Guanylate cyclase domain occupies 454–582 (TVMFCDLPAF…ETVTLASQME (129 aa)). Mg(2+) contacts are provided by Asp-459 and Asp-503.

Belongs to the adenylyl cyclase class-4/guanylyl cyclase family. As to quaternary structure, heterodimer; with other soluble guanylate cyclases. Heme is required as a cofactor. As to expression, expressed in a small number of neurons, corresponding to URX, AQR and PQR neurons.

The protein resides in the cytoplasm. It catalyses the reaction GTP = 3',5'-cyclic GMP + diphosphate. May be regulated by molecular oxygen. Probably not activated by nitric oxide (NO). Functionally, synthesizes cyclic GMP (cGMP) from GTP. Influences aerotaxis responses, aggregation and bordering behaviors (gathering around the edge of a bacterial lawn) in combination with other soluble guanylate cyclases. The protein is Soluble guanylate cyclase gcy-32 (gcy-32) of Caenorhabditis elegans.